The sequence spans 759 residues: Secretin XpsD (759 aa).

The signal sequence occupies residues 1–21; it reads MSERMTPRLFPVSLLIGLLAG. C22 carries the N-palmitoyl cysteine lipid modification. C22 is lipidated: S-diacylglycerol cysteine. Positions 40–51 are enriched in low complexity; sequence VGAAGATQTTAE. Residues 40–69 form a disordered region; sequence VGAAGATQTTAEQRADGNASAKPTPVIRRG. Positions 92–187 are N0; sequence GSATFNFEGE…APSTASPSAA (96 aa). The interval 189-253 is N1; that stretch reads GFEVRVVPLK…VQIFDVDWLS (65 aa). The segment at 254 to 323 is N2; it reads GMSVGVFPIQ…IQQWLDRIDS (70 aa). The tract at residues 326–474 is N3; sequence GGVRLFSYEL…SIRDVIEKLD (149 aa). Residues 352 to 434 form a disordered region; that stretch reads GGRGNGGNSG…PPSTNQNGSV (83 aa). A compositionally biased stretch (gly residues) spans 392–401; the sequence is ATGGDIGGTS. Over residues 425 to 434 the composition is skewed to polar residues; that stretch reads PPSTNQNGSV. Residues 479 to 734 are secretin; that stretch reads QVHIEAQIAE…VLITPSIVRN (256 aa). A s domain region spans residues 736–759; it reads QDARDLTDEYGSKFKSMRPMDVHK.

This sequence belongs to the bacterial secretin family. GSP D subfamily. Forms a cylindrical channel with 15 subunits. Binds to XpsN.

It is found in the cell outer membrane. Functionally, involved in a type II secretion system (T2SS, formerly general secretion pathway, GSP) for the export of proteins. This subunit forms the outer membrane channel. The chain is Secretin XpsD (xpsD) from Xanthomonas campestris pv. campestris (strain ATCC 33913 / DSM 3586 / NCPPB 528 / LMG 568 / P 25).